The following is an 824-amino-acid chain: Ras guanine nucleotide exchange factor I (824 aa).

Disordered regions lie at residues 1–51 and 65–167; these read MSNP…KPTK and GSNL…LILD. Residues 8–41 are compositionally biased toward low complexity; sequence SNSTNGSSNSLNGESVSPNRLGSSPGSPISKASS. Residues 83-95 show a composition bias toward polar residues; that stretch reads NSSVGLLNNSTGS. A compositionally biased stretch (low complexity) spans 104-116; sequence SSPKSSYILSSSI. Over residues 117 to 128 the composition is skewed to gly residues; that stretch reads GSGGSGGGGGSS. Residues 136-167 show a composition bias toward low complexity; it reads SASNNSSGPRSRSGSLGKNNSSQQNNNNLILD. Positions 223 to 255 constitute a LisH domain; sequence GRDNILQLILQHLQFEGLMDSRKILEEEAKIQY. 2 disordered regions span residues 330 to 354 and 398 to 425; these read YVDE…TTAT and NTQQ…STGT. Residues 331–341 show a composition bias toward basic and acidic residues; the sequence is VDEKDNDKPSK. Over residues 343 to 354 the composition is skewed to low complexity; that stretch reads SPTTATTTTTAT. Polar residues predominate over residues 413–425; that stretch reads LKSTQSITGSTGT. An N-terminal Ras-GEF domain is found at 426–551; it reads LGPQVKAASL…VISDALNSGL (126 aa). The 232-residue stretch at 585 to 816 folds into the Ras-GEF domain; sequence DEEEISRQLT…YTRSMSFEPR (232 aa).

In terms of biological role, promotes the exchange of Ras-bound GDP by GTP. The protein is Ras guanine nucleotide exchange factor I (gefI) of Dictyostelium discoideum (Social amoeba).